Consider the following 602-residue polypeptide: Elongation factor 4 (602 aa).

Residues 8–189 (KNIRNFSIIA…KIITTIPAPS (182 aa)) form the tr-type G domain. GTP-binding positions include 20–25 (DHGKST) and 136–139 (NKID).

The protein belongs to the TRAFAC class translation factor GTPase superfamily. Classic translation factor GTPase family. LepA subfamily.

The protein resides in the cell inner membrane. The catalysed reaction is GTP + H2O = GDP + phosphate + H(+). Its function is as follows. Required for accurate and efficient protein synthesis under certain stress conditions. May act as a fidelity factor of the translation reaction, by catalyzing a one-codon backward translocation of tRNAs on improperly translocated ribosomes. Back-translocation proceeds from a post-translocation (POST) complex to a pre-translocation (PRE) complex, thus giving elongation factor G a second chance to translocate the tRNAs correctly. Binds to ribosomes in a GTP-dependent manner. The polypeptide is Elongation factor 4 (Helicobacter pylori (strain ATCC 700392 / 26695) (Campylobacter pylori)).